Here is a 245-residue protein sequence, read N- to C-terminus: MSEKDLGGGKKAGFIARTWRGFWRWSARLLVAFLILSLVLVATVSVINPPTWAWRIDRALFPPKEDIQVRHQWVPLDKIAAHMQLAVIAAEDQRFTLHNGVDFAAIKTAIADRDPGEPLRGASTLTQQTAKNLFLWSSRSFVRKGLEAWFALLLDTLSGKRRTLELYLNIVEFGPGIYGVEAASRYYFNKGAGKLSTREAALLAALLPNPWSYRINPPTAYMNRRADWIARQMRQLGMATLKDLD.

Residues 29–49 (LLVAFLILSLVLVATVSVINP) form a helical membrane-spanning segment.

It belongs to the glycosyltransferase 51 family.

Its subcellular location is the cell inner membrane. It carries out the reaction [GlcNAc-(1-&gt;4)-Mur2Ac(oyl-L-Ala-gamma-D-Glu-L-Lys-D-Ala-D-Ala)](n)-di-trans,octa-cis-undecaprenyl diphosphate + beta-D-GlcNAc-(1-&gt;4)-Mur2Ac(oyl-L-Ala-gamma-D-Glu-L-Lys-D-Ala-D-Ala)-di-trans,octa-cis-undecaprenyl diphosphate = [GlcNAc-(1-&gt;4)-Mur2Ac(oyl-L-Ala-gamma-D-Glu-L-Lys-D-Ala-D-Ala)](n+1)-di-trans,octa-cis-undecaprenyl diphosphate + di-trans,octa-cis-undecaprenyl diphosphate + H(+). It participates in cell wall biogenesis; peptidoglycan biosynthesis. In terms of biological role, peptidoglycan polymerase that catalyzes glycan chain elongation from lipid-linked precursors. In Shewanella amazonensis (strain ATCC BAA-1098 / SB2B), this protein is Biosynthetic peptidoglycan transglycosylase.